The following is a 363-amino-acid chain: S-adenosylmethionine:tRNA ribosyltransferase-isomerase (363 aa).

Belongs to the QueA family. As to quaternary structure, monomer.

It localises to the cytoplasm. It carries out the reaction 7-aminomethyl-7-carbaguanosine(34) in tRNA + S-adenosyl-L-methionine = epoxyqueuosine(34) in tRNA + adenine + L-methionine + 2 H(+). The protein operates within tRNA modification; tRNA-queuosine biosynthesis. Transfers and isomerizes the ribose moiety from AdoMet to the 7-aminomethyl group of 7-deazaguanine (preQ1-tRNA) to give epoxyqueuosine (oQ-tRNA). The sequence is that of S-adenosylmethionine:tRNA ribosyltransferase-isomerase from Brucella anthropi (strain ATCC 49188 / DSM 6882 / CCUG 24695 / JCM 21032 / LMG 3331 / NBRC 15819 / NCTC 12168 / Alc 37) (Ochrobactrum anthropi).